Here is a 359-residue protein sequence, read N- to C-terminus: Olfactory receptor 5T2 (359 aa).

At methionine 1–threonine 64 the chain is on the extracellular side. Asparagine 44 is a glycosylation site (N-linked (GlcNAc...) asparagine). Residues isoleucine 65–isoleucine 85 traverse the membrane as a helical segment. Residues leucine 86–glutamine 93 lie on the Cytoplasmic side of the membrane. Residues leucine 94–serine 114 form a helical membrane-spanning segment. At valine 115–alanine 138 the chain is on the extracellular side. A helical transmembrane segment spans residues glutamine 139–tyrosine 159. The Cytoplasmic segment spans residues aspartate 160 to arginine 178. The helical transmembrane segment at valine 179–threonine 199 threads the bilayer. Residues valine 200–glutamine 235 are Extracellular-facing. A helical transmembrane segment spans residues leucine 236–serine 256. At tyrosine 257–valine 276 the chain is on the cytoplasmic side. A helical transmembrane segment spans residues phenylalanine 277–methionine 297. At tyrosine 298–aspartate 310 the chain is on the extracellular side. A helical transmembrane segment spans residues methionine 311–leucine 331. Residues arginine 332–lysine 359 lie on the Cytoplasmic side of the membrane.

It belongs to the G-protein coupled receptor 1 family.

The protein localises to the cell membrane. In terms of biological role, odorant receptor. The polypeptide is Olfactory receptor 5T2 (OR5T2) (Homo sapiens (Human)).